Reading from the N-terminus, the 242-residue chain is Tropomyosin-1 (242 aa).

2 disordered regions span residues 1–31 (MDAI…ELTA) and 65–96 (TSLT…QTDY). A coiled-coil region spans residues 1 to 242 (MDAIKKKMSA…DELLLELASM (242 aa)). Composition is skewed to basic and acidic residues over residues 13–23 (TKLEEADKQAQ) and 70–96 (KYNE…QTDY).

The protein belongs to the tropomyosin family. As to quaternary structure, homodimer. As to expression, expressed ubiquitously.

The chain is Tropomyosin-1 (TPM1) from Podocoryna carnea (Hydrozoan).